A 228-amino-acid polypeptide reads, in one-letter code: Heptaprenylglyceryl phosphate synthase (228 aa).

Lys-12 lines the sn-glycerol 1-phosphate pocket. The Mg(2+) site is built by Asp-14 and Ser-40. Residues 158–163, Gly-188, and 208–209 each bind sn-glycerol 1-phosphate; these read YLEYSG and GN.

Belongs to the GGGP/HepGP synthase family. Group I subfamily. Homodimer. It depends on Mg(2+) as a cofactor.

It catalyses the reaction sn-glycerol 1-phosphate + all-trans-heptaprenyl diphosphate = 3-heptaprenyl-sn-glycero-1-phosphate + diphosphate. The protein operates within membrane lipid metabolism; glycerophospholipid metabolism. In terms of biological role, prenyltransferase that catalyzes in vivo the transfer of the heptaprenyl moiety of heptaprenyl pyrophosphate (HepPP; 35 carbon atoms) to the C3 hydroxyl of sn-glycerol-1-phosphate (G1P), producing heptaprenylglyceryl phosphate (HepGP). This reaction is an ether-bond-formation step in the biosynthesis of archaea-type G1P-based membrane lipids found in Bacillales. To a much lesser extent, is also able to use geranyl diphosphate (GPP; C10) and geranylgeranyl diphosphate (GGPP; C20) as the prenyl donors, but not farnesyl pyrophosphate (FPP; C15). Cannot use glycerol-3-phosphate (G3P) or 3-phosphoglycerate (3PG) as an acceptor. The polypeptide is Heptaprenylglyceryl phosphate synthase (Bacillus subtilis (strain 168)).